The primary structure comprises 469 residues: UDP-N-acetylmuramate--L-alanine ligase (469 aa).

118 to 124 (GTHGKTT) contributes to the ATP binding site.

Belongs to the MurCDEF family.

Its subcellular location is the cytoplasm. The enzyme catalyses UDP-N-acetyl-alpha-D-muramate + L-alanine + ATP = UDP-N-acetyl-alpha-D-muramoyl-L-alanine + ADP + phosphate + H(+). It functions in the pathway cell wall biogenesis; peptidoglycan biosynthesis. Cell wall formation. The protein is UDP-N-acetylmuramate--L-alanine ligase of Lachnoclostridium phytofermentans (strain ATCC 700394 / DSM 18823 / ISDg) (Clostridium phytofermentans).